Consider the following 823-residue polypeptide: Kinesin-like protein KIN-7N (823 aa).

A Kinesin motor domain is found at 3–325 (KICVAVRVRP…LQFASRAKRI (323 aa)). 83–90 (GQTSSGKT) serves as a coordination point for ATP. Coiled-coil stretches lie at residues 341-414 (LKRQ…NLNN), 527-557 (RENH…FNEQ), and 696-786 (EKKL…MEEE).

It belongs to the TRAFAC class myosin-kinesin ATPase superfamily. Kinesin family. KIN-7 subfamily.

This is Kinesin-like protein KIN-7N from Arabidopsis thaliana (Mouse-ear cress).